A 389-amino-acid polypeptide reads, in one-letter code: Acetoin utilization protein AcuC (389 aa).

This sequence belongs to the histone deacetylase family.

The protein operates within ketone degradation; acetoin degradation. Functionally, role in growth on acetoin or butanediol. Involved in the breakdown of these compounds used as a carbon source. This is Acetoin utilization protein AcuC (acuC) from Staphylococcus aureus (strain MRSA252).